The sequence spans 904 residues: MQTHEIRKRFLDHFVKAGHTEVPSASVILDDPNLLFVNAGMVQFVPFFLGQRTPPYPTATSIQKCIRTPDIDEVGITTRHNTFFQMAGNFSFGDYFKRGAIELAWALLTNSLAAGGYGLDPERIWTTVYFDDDEAVRLWQEVAGLPAERIQRRGMADNYWSMGIPGPCGPSSEIYYDRGPEFGPAGGPIVSEDRYLEVWNLVFMQNERGEGTTKEDYQILGPLPRNNIDTGMGVERIALVLQDVHNVYETDLLRPVIDTVARVAARAYDVGNHEDDVRYRIIADHSRTAAILIGDGVSPGNDGRGYVLRRLLRRVIRSAKLLGIDAAIVGDLMATVRNAMGPSYPELVADFERISRIAVAEETAFNRTLASGSRLFEEVASSTKKSGATVLSGSDAFTLHDTYGFPIELTLEMAAETGLQVDEIGFRELMAEQRRRAKADAAARKHAHADLSAYRELVDAGATEFTGFDELRSQARILGIFVDGKRVPVVAHGVAGGAGEGQRVELVLDRTPLYAESGGQIADEGTISGTGSSEAARAAVTDVQKIAKTLWVHRVNVESGEFVEGDTVIAAVDPGWRRGATQGHSGTHMVHAALRQVLGPNAVQAGSLNRPGYLRFDFNWQGPLTDDQRTQVEEVTNEAVQADFEVRTFTEQLDKAKAMGAIALFGESYPDEVRVVEMGGPFSLELCGGTHVSNTAQIGPVTILGESSIGSGVRRVEAYVGLDSFRHLAKERALMAGLASSLKVPSEEVPARVANLVERLRAAEKELERVRMASARAAATNAAAGAQRIGNVRLVAQRMSGGMTAADLRSLIGDIRGKLGSEPAVVALIAEGESQTVPYAVAANPAAQDLGIRANDLVKQLAVAVEGRGGGKADLAQGSGKNPTGIDAALDAVRSEIAVIARVG.

4 residues coordinate Zn(2+): H584, H588, C687, and H691.

The protein belongs to the class-II aminoacyl-tRNA synthetase family. It depends on Zn(2+) as a cofactor.

Its subcellular location is the cytoplasm. The enzyme catalyses tRNA(Ala) + L-alanine + ATP = L-alanyl-tRNA(Ala) + AMP + diphosphate. In terms of biological role, catalyzes the attachment of alanine to tRNA(Ala) in a two-step reaction: alanine is first activated by ATP to form Ala-AMP and then transferred to the acceptor end of tRNA(Ala). Also edits incorrectly charged Ser-tRNA(Ala) and Gly-tRNA(Ala) via its editing domain. In Mycobacterium bovis (strain ATCC BAA-935 / AF2122/97), this protein is Alanine--tRNA ligase.